Reading from the N-terminus, the 621-residue chain is GPI-anchor transamidase component GPAA1 (621 aa).

Over 1–19 (MGLLSDPVRRRALARIVLR) the chain is Cytoplasmic. The helical transmembrane segment at 20–41 (LNTPLCVLSYVAGIAWFLALAF) threads the bilayer. Over 42–370 (PPLTQRTYMS…LLPALSRFVS (329 aa)) the chain is Lumenal. Tyr-49 and Ser-51 together coordinate a 2-acyl-6-[6-phosphoethanolamine-alpha-D-mannosyl-(1-&gt;2)-6-phosphoethanolamine-alpha-D-mannosyl-(1-&gt;6)-2-phosphoethanolamine-alpha-D-mannosyl-(1-&gt;4)-alpha-D-glucosaminyl]-1-(1-radyl,2-acyl-sn-glycero-3-phospho)-1D-myo-inositol. A glycan (N-linked (GlcNAc...) asparagine) is linked at Asn-203. A disulfide bridge links Cys-259 with Cys-266. A 2-acyl-6-[6-phosphoethanolamine-alpha-D-mannosyl-(1-&gt;2)-6-phosphoethanolamine-alpha-D-mannosyl-(1-&gt;6)-2-phosphoethanolamine-alpha-D-mannosyl-(1-&gt;4)-alpha-D-glucosaminyl]-1-(1-radyl,2-acyl-sn-glycero-3-phospho)-1D-myo-inositol is bound by residues His-354, Gln-355, and Ser-356. Residue Gln-355 participates in Mg(2+) binding. Residues 371–393 (IGLYMPATGFLLLVLGLKALELW) form a helical membrane-spanning segment. The Cytoplasmic segment spans residues 394 to 425 (MQLHQAGVNPEEAGKAPSPGTPLLPTQGVGLA). Residues 426–450 (SLTAPLLISQAMGLALYFLPVLGQH) form a helical membrane-spanning segment. Residues 451 to 462 (LATQHFPVAEAE) are Lumenal-facing. A helical membrane pass occupies residues 463 to 483 (AVVLTLLAIYVAGLALPHNTH). Topologically, residues 484–495 (RVVNSQVPDRGW) are cytoplasmic. 2 consecutive transmembrane segments (helical) span residues 496–519 (MALKLVALIYLALQLGCIALLNFS) and 520–536 (LGFLLAATMVPAAALAK). At 537–540 (PHGP) the chain is on the cytoplasmic side. The helical transmembrane segment at 541–563 (RTLYAALLVVTSPAVTLFGSLFL) threads the bilayer. Topologically, residues 564 to 597 (WRELLEVPLSLAEGWQLFLTALAQGVLEHYTYGA) are lumenal. The chain crosses the membrane as a helical span at residues 598 to 619 (LLFPILALGLYPCWLLFWNVLF). Residues 620-621 (WK) are Cytoplasmic-facing.

As to quaternary structure, heteropentamer. Part of the GPI-anchor transamidase complex, consisting of PIGK, PIGT, PIGS, PIGU and GAA1. Interacts with PIGK. As to expression, ubiquitously expressed in fetal and adult tissues. Expressed at higher levels in fetal tissues than adult tissues. In embryos abundant in the choroid plexus, skeletal muscle,.

Its subcellular location is the endoplasmic reticulum membrane. The protein operates within glycolipid biosynthesis; glycosylphosphatidylinositol-anchor biosynthesis. In terms of biological role, component of the glycosylphosphatidylinositol-anchor (GPI-anchor) transamidase (GPI-T) complex that catalyzes the formation of the linkage between a proprotein and a GPI-anchor and participates in GPI anchored protein biosynthesis. Binds GPI-anchor. In Mus musculus (Mouse), this protein is GPI-anchor transamidase component GPAA1.